Reading from the N-terminus, the 210-residue chain is Thymidylate kinase (210 aa).

An ATP-binding site is contributed by 10-17; it reads GPEGAGKS.

Belongs to the thymidylate kinase family.

It carries out the reaction dTMP + ATP = dTDP + ADP. Functionally, phosphorylation of dTMP to form dTDP in both de novo and salvage pathways of dTTP synthesis. The protein is Thymidylate kinase of Pseudomonas aeruginosa (strain LESB58).